The primary structure comprises 368 residues: Cytochrome b (368 aa).

The next 4 helical transmembrane spans lie at 33–53 (FGSLLGLCLITQILTGIFLAM), 77–99 (WLIRSIHANSASMFFICIYTHTG), 112–132 (TWMVGVTLLLITILTAFLGYV), and 178–198 (FYALHFLFPFLISALSLMHII). Heme b is bound by residues H83 and H97. H182 and H196 together coordinate heme b. H201 is an a ubiquinone binding site. 4 helical membrane-spanning segments follow: residues 224–244 (FSAKDLIGVILLWIMLGSVVL), 288–308 (LGGVLALIMSIAILYFLPMMN), 323–343 (IAFWLLVTNFIVLMWIGSKPV), and 345–365 (SPFEEIGQIMTVTYFSIYMIM).

It belongs to the cytochrome b family. In terms of assembly, the main subunits of complex b-c1 are: cytochrome b, cytochrome c1 and the Rieske protein. It depends on heme b as a cofactor.

The protein resides in the mitochondrion inner membrane. Functionally, component of the ubiquinol-cytochrome c reductase complex (complex III or cytochrome b-c1 complex) that is part of the mitochondrial respiratory chain. The b-c1 complex mediates electron transfer from ubiquinol to cytochrome c. Contributes to the generation of a proton gradient across the mitochondrial membrane that is then used for ATP synthesis. The chain is Cytochrome b (mt:Cyt-b) from Bugula neritina (Brown bryozoan).